Here is a 122-residue protein sequence, read N- to C-terminus: MLNTLLVVGFGGFIGAILRMFSINLVNKFFPYSISLGTLFVNVLGSFIIGLLFSYAQNKGLSPLLKSFISTGFLGAFTTFSTFSYQNLLLLQSGNYLHFALNIILNVFLCLFAAWLGFIIFK.

4 helical membrane-spanning segments follow: residues 6 to 26 (LVVG…INLV), 33 to 53 (SISL…GLLF), 60 to 80 (GLSP…FTTF), and 101 to 121 (LNII…FIIF). Gly-75 and Thr-78 together coordinate Na(+).

This sequence belongs to the fluoride channel Fluc/FEX (TC 1.A.43) family.

The protein localises to the cell inner membrane. It carries out the reaction fluoride(in) = fluoride(out). Its activity is regulated as follows. Na(+) is not transported, but it plays an essential structural role and its presence is essential for fluoride channel function. Fluoride-specific ion channel. Important for reducing fluoride concentration in the cell, thus reducing its toxicity. The sequence is that of Fluoride-specific ion channel FluC from Campylobacter jejuni subsp. jejuni serotype O:6 (strain 81116 / NCTC 11828).